The sequence spans 334 residues: Glycerol-3-phosphate dehydrogenase [NAD(P)+] (334 aa).

Residues Trp14, Arg34, and Lys107 each coordinate NADPH. The sn-glycerol 3-phosphate site is built by Lys107 and Gly135. Ala139 lines the NADPH pocket. Sn-glycerol 3-phosphate-binding residues include Lys190, Asp243, Ser253, Arg254, and Asn255. The active-site Proton acceptor is the Lys190. An NADPH-binding site is contributed by Arg254. Positions 272 and 273 each coordinate NADPH.

The protein belongs to the NAD-dependent glycerol-3-phosphate dehydrogenase family.

Its subcellular location is the cytoplasm. It catalyses the reaction sn-glycerol 3-phosphate + NAD(+) = dihydroxyacetone phosphate + NADH + H(+). The catalysed reaction is sn-glycerol 3-phosphate + NADP(+) = dihydroxyacetone phosphate + NADPH + H(+). It participates in membrane lipid metabolism; glycerophospholipid metabolism. Its function is as follows. Catalyzes the reduction of the glycolytic intermediate dihydroxyacetone phosphate (DHAP) to sn-glycerol 3-phosphate (G3P), the key precursor for phospholipid synthesis. This is Glycerol-3-phosphate dehydrogenase [NAD(P)+] from Neorickettsia sennetsu (strain ATCC VR-367 / Miyayama) (Ehrlichia sennetsu).